A 277-amino-acid polypeptide reads, in one-letter code: Large ribosomal subunit protein uL2 (277 aa).

The tract at residues 225 to 277 is disordered; that stretch reads MNPIDHPHGGGEGKTAAGRHPVSPWGTPSKGFRTRVNKRTDGMIVRRRYSNKG.

Belongs to the universal ribosomal protein uL2 family. As to quaternary structure, part of the 50S ribosomal subunit. Forms a bridge to the 30S subunit in the 70S ribosome.

In terms of biological role, one of the primary rRNA binding proteins. Required for association of the 30S and 50S subunits to form the 70S ribosome, for tRNA binding and peptide bond formation. It has been suggested to have peptidyltransferase activity; this is somewhat controversial. Makes several contacts with the 16S rRNA in the 70S ribosome. In Nitrosospira multiformis (strain ATCC 25196 / NCIMB 11849 / C 71), this protein is Large ribosomal subunit protein uL2.